Reading from the N-terminus, the 620-residue chain is Protein CNGC15b (620 aa).

6 consecutive transmembrane segments (helical) span residues 73 to 93 (IFLVACLISLFVDPLFFYLPI), 102 to 122 (IGIAVEVFLIIIRSIADVFYV), 161 to 181 (GFFLDFIAALPLPQVLIWIVI), 198 to 218 (FIIIIQYLPRLFLIFPLSSQI), 237 to 257 (LMLYMLASHVLGACWYLLSIE), and 356 to 376 (GEIMFAIVIATLGLVLFALLI). 462 to 559 (LFDAMDERML…SSTRTVKAIS (98 aa)) contacts a nucleoside 3',5'-cyclic phosphate.

The protein belongs to the cyclic nucleotide-gated cation channel (TC 1.A.1.5) family. In terms of assembly, interacts (via N-terminus) with DMI1 (via c-terminus). The Nod factor has no effect on this interaction, implying that the complex is maintained after activation. In terms of tissue distribution, expressed in roots, stems, leaves, flowers and pods.

It localises to the nucleus membrane. Functionally, cyclic nucleotide-gated channel involved in the establishment of both rhizobial and mycorrhizal associations. Required for full activation of nuclear-localized Ca(2+) oscillations by Nod and Myc factors. Simultaneous activation of the K(+)-permeable channel DMI1 and the Ca(2+) channel CNGC15 can give rise to sustained Ca(2+) oscillations. May function during fertilization in both female and male gametophytic Ca(2+) signaling. In Medicago truncatula (Barrel medic), this protein is Protein CNGC15b.